A 202-amino-acid chain; its full sequence is LexA repressor (202 aa).

The H-T-H motif DNA-binding region spans 29–49 (VREICEATGLKSTSTVHGHLT). Catalysis depends on for autocatalytic cleavage activity residues serine 126 and lysine 163.

This sequence belongs to the peptidase S24 family. As to quaternary structure, homodimer.

The catalysed reaction is Hydrolysis of Ala-|-Gly bond in repressor LexA.. In terms of biological role, represses a number of genes involved in the response to DNA damage (SOS response), including recA and lexA. In the presence of single-stranded DNA, RecA interacts with LexA causing an autocatalytic cleavage which disrupts the DNA-binding part of LexA, leading to derepression of the SOS regulon and eventually DNA repair. This Caldicellulosiruptor saccharolyticus (strain ATCC 43494 / DSM 8903 / Tp8T 6331) protein is LexA repressor.